A 319-amino-acid chain; its full sequence is Phospho-N-acetylmuramoyl-pentapeptide-transferase (319 aa).

Transmembrane regions (helical) follow at residues 5–25 (LIPFISSFALTVIFLPLFIGF), 51–71 (TMGGVVFMLAGVISTLWVLIW), 79–99 (AWILIIAFLGYGIIGFLDDGI), 116–136 (LGQIIIAALIITLAFSDHFAF), 149–169 (SFLFSLFVLFWLVGFSNAVNL), 172–192 (GLDGLATGLSIIAYATYAWIA), 197–217 (NWVIVVFTLSVIGGLVGFFIF), 224–244 (IFMGDAGSLALGGGLATVSIF), 252–272 (LLIGIVFVLETLSVILQVISF), and 299–319 (VDIVFWIVGLIGSIIYLIIWG).

The protein belongs to the glycosyltransferase 4 family. MraY subfamily. The cofactor is Mg(2+).

The protein localises to the cell membrane. It catalyses the reaction UDP-N-acetyl-alpha-D-muramoyl-L-alanyl-gamma-D-glutamyl-L-lysyl-D-alanyl-D-alanine + di-trans,octa-cis-undecaprenyl phosphate = Mur2Ac(oyl-L-Ala-gamma-D-Glu-L-Lys-D-Ala-D-Ala)-di-trans,octa-cis-undecaprenyl diphosphate + UMP. Its pathway is cell wall biogenesis; peptidoglycan biosynthesis. In terms of biological role, catalyzes the initial step of the lipid cycle reactions in the biosynthesis of the cell wall peptidoglycan: transfers peptidoglycan precursor phospho-MurNAc-pentapeptide from UDP-MurNAc-pentapeptide onto the lipid carrier undecaprenyl phosphate, yielding undecaprenyl-pyrophosphoryl-MurNAc-pentapeptide, known as lipid I. The polypeptide is Phospho-N-acetylmuramoyl-pentapeptide-transferase (Lactobacillus johnsonii (strain CNCM I-12250 / La1 / NCC 533)).